A 66-amino-acid polypeptide reads, in one-letter code: Small archaeal modifier protein 2 (66 aa).

A Glycyl lysine isopeptide (Lys-Gly) (interchain with G-Cter in SAMP2) cross-link involves residue lysine 58. 1-thioglycine; alternate is present on glycine 66. Glycine 66 carries the glycyl adenylate; alternate modification. Glycine 66 is covalently cross-linked (Glycyl lysine isopeptide (Gly-Lys) (interchain with K-? in acceptor proteins); alternate).

As to quaternary structure, monomer. Monomeric and polymeric forms interact with NcsA. The C-terminal glycine is likely acyl-adenylated (-COAMP) by UbaA, and also probably thiocarboxylated (-COSH) to function in sulfur transfer.

In terms of biological role, functions as a protein modifier covalently attached to lysine residues of substrate proteins, as well as a sulfur carrier in tRNA thiolation. The protein modification process is termed sampylation and involves the formation of an isopeptide bond between the SAMP2 C-terminal glycine carboxylate and the epsilon-amino group of lysine residues on target proteins. Is able to form polymeric chains with itself at Lys-58, similar to ubiquitin and other ubiquitin-like proteins. May serve as a proteolytic signal in the cell to target proteins for degradation by proteasomes. The sequence is that of Small archaeal modifier protein 2 (samp2) from Haloferax volcanii (strain ATCC 29605 / DSM 3757 / JCM 8879 / NBRC 14742 / NCIMB 2012 / VKM B-1768 / DS2) (Halobacterium volcanii).